Reading from the N-terminus, the 370-residue chain is Dual-specificity RNA methyltransferase RlmN (370 aa).

Catalysis depends on glutamate 93, which acts as the Proton acceptor. Positions 99–337 constitute a Radical SAM core domain; it reads EEGRGTLCVS…VTTVRKTRGD (239 aa). Cysteine 106 and cysteine 343 are disulfide-bonded. The [4Fe-4S] cluster site is built by cysteine 113, cysteine 117, and cysteine 120. Residues 167–168, serine 199, 221–223, and asparagine 300 contribute to the S-adenosyl-L-methionine site; these read GE and SLH. The S-methylcysteine intermediate role is filled by cysteine 343.

The protein belongs to the radical SAM superfamily. RlmN family. The cofactor is [4Fe-4S] cluster.

The protein localises to the cytoplasm. It carries out the reaction adenosine(2503) in 23S rRNA + 2 reduced [2Fe-2S]-[ferredoxin] + 2 S-adenosyl-L-methionine = 2-methyladenosine(2503) in 23S rRNA + 5'-deoxyadenosine + L-methionine + 2 oxidized [2Fe-2S]-[ferredoxin] + S-adenosyl-L-homocysteine. The catalysed reaction is adenosine(37) in tRNA + 2 reduced [2Fe-2S]-[ferredoxin] + 2 S-adenosyl-L-methionine = 2-methyladenosine(37) in tRNA + 5'-deoxyadenosine + L-methionine + 2 oxidized [2Fe-2S]-[ferredoxin] + S-adenosyl-L-homocysteine. Functionally, specifically methylates position 2 of adenine 2503 in 23S rRNA and position 2 of adenine 37 in tRNAs. m2A2503 modification seems to play a crucial role in the proofreading step occurring at the peptidyl transferase center and thus would serve to optimize ribosomal fidelity. The protein is Dual-specificity RNA methyltransferase RlmN of Francisella tularensis subsp. tularensis (strain WY96-3418).